Consider the following 82-residue polypeptide: Cytochrome b559 subunit alpha (82 aa).

The chain crosses the membrane as a helical span at residues 22–36; it reads VIHFVTLPSIFLAGF. A heme-binding site is contributed by His24.

Belongs to the PsbE/PsbF family. Heterodimer of an alpha subunit and a beta subunit. PSII is composed of 1 copy each of membrane proteins PsbA, PsbB, PsbC, PsbD, PsbE, PsbF, PsbH, PsbI, PsbJ, PsbK, PsbL, PsbM, PsbT, PsbX, PsbY, PsbZ, Psb30/Ycf12, peripheral proteins PsbO, CyanoQ (PsbQ), PsbU, PsbV and a large number of cofactors. It forms dimeric complexes. The cofactor is heme b.

Its subcellular location is the cellular thylakoid membrane. Its function is as follows. This b-type cytochrome is tightly associated with the reaction center of photosystem II (PSII). PSII is a light-driven water:plastoquinone oxidoreductase that uses light energy to abstract electrons from H(2)O, generating O(2) and a proton gradient subsequently used for ATP formation. It consists of a core antenna complex that captures photons, and an electron transfer chain that converts photonic excitation into a charge separation. The sequence is that of Cytochrome b559 subunit alpha from Parasynechococcus marenigrum (strain WH8102).